A 1491-amino-acid chain; its full sequence is Membrane-associated guanylate kinase, WW and PDZ domain-containing protein 1 (1491 aa).

The region spanning 17–105 is the PDZ 1 domain; that stretch reads ECTVKRGPQG…AVTFKAVRQG (89 aa). The 192-residue stretch at 96 to 287 folds into the Guanylate kinase-like domain; sequence AVTFKAVRQG…APITDPSQKF (192 aa). 103-110 is a binding site for ATP; that stretch reads RQGGRLNK. The segment at 236–267 is disordered; sequence AENEEEDDVPEMNSSFTADSGEQEEHTLQETA. The WW 1 domain maps to 300–333; sequence GPLPENWEMAYTENGEVYFIDHNTKTTSWLDPRC. Residue Ser357 is modified to Phosphoserine. The WW 2 domain occupies 359–392; the sequence is LELPAGWEKIEDPVYGIYYVDHINRKTQYENPVL. The span at 411–421 shows a compositional bias: low complexity; that stretch reads QQQQQQQQQQQ. The segment at 411-462 is disordered; that stretch reads QQQQQQQQQQQTEEWTEDHSALVPPVIPNHPPSNPEPAREVPLQGKPFFTRN. Residues 435–445 show a composition bias toward pro residues; the sequence is PVIPNHPPSNP. One can recognise a PDZ 2 domain in the interval 472-554; that stretch reads HTKLRKSSRG…GASVDLELCR (83 aa). Polar residues predominate over residues 586–600; the sequence is QETYDSPASHSSKTG. Disordered regions lie at residues 586–623, 720–832, and 932–987; these read QETYDSPASHSSKTGKVNGMKDARPSSPADVASNSSHG, QRGG…FGEC, and TENE…GGGS. One can recognise a PDZ 3 domain in the interval 643–721; sequence TVHIVKGPMG…GSEVTLLVQR (79 aa). Ser730 and Ser741 each carry phosphoserine. Residues 742-752 are compositionally biased toward low complexity; it reads QNSSQHSVSSH. Polar residues predominate over residues 756–766; it reads HTASPSHSTQV. Ser800 is subject to Phosphoserine. One can recognise a PDZ 4 domain in the interval 813–895; that stretch reads SGLSKGERER…DELICVDGTP (83 aa). Residues 939 to 951 are compositionally biased toward polar residues; sequence PASSHHSSNQPAS. Positions 970–1066 constitute a PDZ 5 domain; sequence SSGSGSTSGI…DRILAVNGCS (97 aa). The interval 970-1066 is interaction with FCHSD2; that stretch reads SSGSGSTSGI…DRILAVNGCS (97 aa). Residues 975-987 show a composition bias toward gly residues; that stretch reads STSGIGSGGGGGS. At Ser1071 the chain carries Phosphoserine. The span at 1112–1130 shows a compositional bias: polar residues; that stretch reads TTTHTPSQQGTQETRNTTK. Disordered regions lie at residues 1112–1143 and 1234–1491; these read TTTHTPSQQGTQETRNTTKPKQESQFEFKAPQ and DGSV…DLSI. Residues 1124-1206 form the PDZ 6 domain; that stretch reads ETRNTTKPKQ…DEILEINGET (83 aa). Composition is skewed to basic and acidic residues over residues 1278–1338, 1354–1396, and 1403–1491; these read DLHK…DAQA, KRRE…DGSP, and LERL…DLSI. Ser1361 and Ser1412 each carry phosphoserine.

In terms of assembly, part of a complex composed of AMOTL2, MAGI1 and CDH5, within the complex AMOTL2 acts as a scaffold protein for the interaction of MAGI1 with CDH5. The complex is required for coupling actin fibers to cell junctions in endothelial cells. Interacts through its WW 2 domain with SYNPO and through its PDZ 5 domain with ACTN4. Interacts with cytoplasmic domain of ADGRB1. Interacts via its WW domains with DRPLA. Interacts with ESAM, LRP2 and CXADR. May interact with CTNNB1. Interacts through its PDZ 1 domain with NET1. Interacts with ASIC3 and AMOT. Interacts with FCHSD2. Interacts with IGSF5/JAM4 and through its PDZ 2 and 3 domains with NPHS1 forming a tripartite complex. Interacts with DDN. Interacts with DLL1. Interacts with KCNJ10 and possibly with KCNJ10/KCNJ16 heterodimer; this interaction may facilitate KCNJ10/KCNJ16 potassium channel expression at the basolateral membrane in kidney tubular cells. Interacts with PRRG4 (via cytoplasmic domain). As to quaternary structure, interacts (via PDZ domain) with RAPGEF2. In terms of tissue distribution, widely expressed with the exception of skeletal muscle. Isoform 1, isoform 2 and isoform 6 are highly expressed in colon, kidney, lung, liver, and pancreas. Isoform 5 is predominantly expressed in brain and heart. Isoform 3 and isoform 4 are highly expressed in pancreas and brain.

It is found in the cell junction. The protein resides in the tight junction. Its subcellular location is the cell membrane. Plays a role in coupling actin fibers to cell junctions in endothelial cells, via its interaction with AMOTL2 and CDH5. May regulate acid-induced ASIC3 currents by modulating its expression at the cell surface. This Homo sapiens (Human) protein is Membrane-associated guanylate kinase, WW and PDZ domain-containing protein 1 (MAGI1).